The primary structure comprises 287 residues: Phosphatidylserine decarboxylase proenzyme (287 aa).

Residues D89, H146, and S252 each act as charge relay system; for autoendoproteolytic cleavage activity in the active site. The Schiff-base intermediate with substrate; via pyruvic acid; for decarboxylase activity role is filled by S252. Pyruvic acid (Ser); by autocatalysis is present on S252.

It belongs to the phosphatidylserine decarboxylase family. PSD-B subfamily. Prokaryotic type I sub-subfamily. As to quaternary structure, heterodimer of a large membrane-associated beta subunit and a small pyruvoyl-containing alpha subunit. The cofactor is pyruvate. Post-translationally, is synthesized initially as an inactive proenzyme. Formation of the active enzyme involves a self-maturation process in which the active site pyruvoyl group is generated from an internal serine residue via an autocatalytic post-translational modification. Two non-identical subunits are generated from the proenzyme in this reaction, and the pyruvate is formed at the N-terminus of the alpha chain, which is derived from the carboxyl end of the proenzyme. The autoendoproteolytic cleavage occurs by a canonical serine protease mechanism, in which the side chain hydroxyl group of the serine supplies its oxygen atom to form the C-terminus of the beta chain, while the remainder of the serine residue undergoes an oxidative deamination to produce ammonia and the pyruvoyl prosthetic group on the alpha chain. During this reaction, the Ser that is part of the protease active site of the proenzyme becomes the pyruvoyl prosthetic group, which constitutes an essential element of the active site of the mature decarboxylase.

It is found in the cell membrane. The catalysed reaction is a 1,2-diacyl-sn-glycero-3-phospho-L-serine + H(+) = a 1,2-diacyl-sn-glycero-3-phosphoethanolamine + CO2. It functions in the pathway phospholipid metabolism; phosphatidylethanolamine biosynthesis; phosphatidylethanolamine from CDP-diacylglycerol: step 2/2. Functionally, catalyzes the formation of phosphatidylethanolamine (PtdEtn) from phosphatidylserine (PtdSer). The polypeptide is Phosphatidylserine decarboxylase proenzyme (Shewanella woodyi (strain ATCC 51908 / MS32)).